We begin with the raw amino-acid sequence, 548 residues long: Probable malate:quinone oxidoreductase (548 aa).

A disordered region spans residues 521–548 (DKPQAADSTPKPQLKPQPVQKEVADIAL). The span at 530 to 541 (PKPQLKPQPVQK) shows a compositional bias: low complexity.

The protein belongs to the MQO family. Requires FAD as cofactor.

It carries out the reaction (S)-malate + a quinone = a quinol + oxaloacetate. It functions in the pathway carbohydrate metabolism; tricarboxylic acid cycle; oxaloacetate from (S)-malate (quinone route): step 1/1. This chain is Probable malate:quinone oxidoreductase, found in Shigella sonnei (strain Ss046).